Consider the following 399-residue polypeptide: Ribose-phosphate pyrophosphokinase 2, chloroplastic (399 aa).

The N-terminal 32 residues, 1 to 32, are a transit peptide targeting the chloroplast; sequence MAAKAAALSSSPFVSSRRLSSPAASLRARTPR. 4 residues coordinate Mg(2+): Asp214, His216, Asp225, and Asp229. The interval 299–314 is binding of phosphoribosylpyrophosphate; sequence GKVAIMVDDMIDTAGT.

Belongs to the ribose-phosphate pyrophosphokinase family. It depends on Mg(2+) as a cofactor.

The protein localises to the plastid. It is found in the chloroplast. It catalyses the reaction D-ribose 5-phosphate + ATP = 5-phospho-alpha-D-ribose 1-diphosphate + AMP + H(+). The protein is Ribose-phosphate pyrophosphokinase 2, chloroplastic of Oryza sativa subsp. japonica (Rice).